Consider the following 457-residue polypeptide: Transcription factor PCF7 (457 aa).

Positions 58-84 (STLHYLLQEKERAQQAHEQLQIYQQQQ) form a coiled coil. Positions 95-119 (RQPASRGPGGGGGGGDGGGSSGEST) are disordered. Residues 101–115 (GPGGGGGGGDGGGSS) are compositionally biased toward gly residues. Residues 140 to 198 (RKDRHSKVCTARGLRDRRVRLAAHTAIRFYDVQDRLGYDRPSKAVDWLMRNAKAAIDEL) form the TCP domain. Disordered stretches follow at residues 199-231 (PDRA…GFGN) and 263-299 (KSLF…SNQQ). Composition is skewed to low complexity over residues 210-225 (AAST…ATST) and 268-278 (SSSTASGAASA).

Forms homodimers and heterodimers.

It localises to the nucleus. Transcription activator. Binds the promoter core sequence 5'-GGNCC-3'. The protein is Transcription factor PCF7 (PCF7) of Oryza sativa subsp. japonica (Rice).